The primary structure comprises 333 residues: UPF0284 protein TGAM_0534 (333 aa).

The protein belongs to the UPF0284 family.

This chain is UPF0284 protein TGAM_0534, found in Thermococcus gammatolerans (strain DSM 15229 / JCM 11827 / EJ3).